The following is a 140-amino-acid chain: Nucleoside diphosphate kinase (140 aa).

The ATP site is built by K11, F59, R87, T93, R104, and N114. The active-site Pros-phosphohistidine intermediate is H117.

It belongs to the NDK family. Homotetramer. The cofactor is Mg(2+).

Its subcellular location is the cytoplasm. The catalysed reaction is a 2'-deoxyribonucleoside 5'-diphosphate + ATP = a 2'-deoxyribonucleoside 5'-triphosphate + ADP. It catalyses the reaction a ribonucleoside 5'-diphosphate + ATP = a ribonucleoside 5'-triphosphate + ADP. Functionally, major role in the synthesis of nucleoside triphosphates other than ATP. The ATP gamma phosphate is transferred to the NDP beta phosphate via a ping-pong mechanism, using a phosphorylated active-site intermediate. The polypeptide is Nucleoside diphosphate kinase (Bradyrhizobium diazoefficiens (strain JCM 10833 / BCRC 13528 / IAM 13628 / NBRC 14792 / USDA 110)).